A 287-amino-acid polypeptide reads, in one-letter code: Probable endonuclease 4 (287 aa).

Zn(2+)-binding residues include His69, His109, Glu146, Asp180, His183, His217, Asp230, His232, and Glu262.

The protein belongs to the AP endonuclease 2 family. Zn(2+) serves as cofactor.

The catalysed reaction is Endonucleolytic cleavage to 5'-phosphooligonucleotide end-products.. Its function is as follows. Endonuclease IV plays a role in DNA repair. It cleaves phosphodiester bonds at apurinic or apyrimidinic (AP) sites, generating a 3'-hydroxyl group and a 5'-terminal sugar phosphate. This chain is Probable endonuclease 4, found in Petrotoga mobilis (strain DSM 10674 / SJ95).